We begin with the raw amino-acid sequence, 364 residues long: Hsp70-binding protein 1 (364 aa).

A disordered region spans residues 1–75; that stretch reads MSDEGSRGSR…DPPPEPMSEE (75 aa). The span at 23–42 shows a compositional bias: gly residues; sequence SSGGGGGGGGGGSSSAGGSG. ARM repeat units follow at residues 137–179, 182–222, 225–264, and 267–306; these read ENMD…TCSQ, AAIQ…CLVR, EAGL…NLLV, and PEHR…SLVT. A phosphoserine mark is found at S356 and S361.

As to quaternary structure, interacts with the ATP-binding domain of HSPA1A. Detected in a ternary complex containing STUB1, HSPA1A and HSPBP1. Interacts with PGLYRP1; this interaction blocks the cytotoxic activity of the PGLYRP1-HSPA1A complex.

Functionally, inhibits HSPA1A chaperone activity by changing the conformation of the ATP-binding domain of HSPA1A and interfering with ATP binding. Interferes with ubiquitination mediated by STUB1 and inhibits chaperone-assisted degradation of target proteins. The polypeptide is Hsp70-binding protein 1 (HSPBP1) (Macaca fascicularis (Crab-eating macaque)).